The sequence spans 1077 residues: MPKRTDIQSILILGAGPIVIGQACEFDYSGAQACKALREEGYRVILVNSNPATIMTDPEMADATYIEPIQWEVVRKIIEKERPDAVLPTMGGQTALNCALDLEKHGVLAEFGVEMIGATADAIDKAEDRSRFDKAMKSIGLECPRADTAKTMEEAYKVLDMVGFPCIIRPSFTMGGTGGGIAYNKEEFEEICRRGLDLSPTNELLIDESLIGWKEYEMEVVRDKADNCIIVCSIENFDPMGIHTGDSITVAPAQTLTDKEYQLMRNASLAVLREIGVETGGSNVQFGINPKDGRMVIIEMNPRVSRSSALASKATGFPIAKIAAKLAVGFTLDELQNDITGGATPASFEPTIDYVVTKIPRFNFEKFAGANDRLTTQMKSVGEVMAIGRNQQESLHKALRGLEVGATGFDEMVDLDAPDALTKIRHELKEAGAERIWYIADAFRAGMSVDGVFNLTNIDRWFLVQIEELVKLEEQVKAGGFAGLTEEVLRQMKRKGFSDARLSKLLGVAESEIRRLRDQFDIHPVYKRVDTCAAEFSSDTAYMYSSYDEECEANPTDKDKIMVLGGGPNRIGQGIEFDYCCVHASLALREDGYETIMVNCNPETVSTDYDTSDRLYFEPVTLEDVLSIARVEKPKGVIVQYGGQTPLKLARALEAAGVPIIGTSPDAIDRAEDRERFQAAVERLGLLQPQNATVTAMEQAVEKSREIGFPLVVRPSYVLGGRAMEIVYDEQDLRRYFNEAVSVSNESPVLLDRFLDDATEVDIDAICDGERVVIGGIMEHIEQAGVHSGDSACSLPAYTLSQEIQDKMREQVEKLAFELGVRGLMNTQFAVKDNEVYLIEVNPRAARTVPFVSKATGAPLAKIAARVMAGQSLESQGFTKEIIPPYYSVKEVVLPFNKFPGVDPLLGPEMRSTGEVMGVGATFAEAYAKAELGCGSVYPEGGRALLSVREGDKQRVVDLASKLVKLGYQLDATHGTAVILGEAGINPRLVNKVHEGRPHILDRIKNNEYTYIVNTAAGRQAIEDSKVLRRGALAEKVNYTTTLNAAFATCMSHTADAKASVTSVQELHAKVKASLEA.

Residues 1–403 (MPKRTDIQSI…SLHKALRGLE (403 aa)) form a carboxyphosphate synthetic domain region. 12 residues coordinate ATP: arginine 129, arginine 169, glycine 175, glycine 176, glutamate 208, leucine 210, glutamate 215, glycine 241, isoleucine 242, histidine 243, glutamine 285, and glutamate 299. Positions 133–328 (DKAMKSIGLE…IAKIAAKLAV (196 aa)) constitute an ATP-grasp 1 domain. Mg(2+) contacts are provided by glutamine 285, glutamate 299, and asparagine 301. 3 residues coordinate Mn(2+): glutamine 285, glutamate 299, and asparagine 301. Residues 404-553 (VGATGFDEMV…YSSYDEECEA (150 aa)) are oligomerization domain. Residues 554–935 (NPTDKDKIMV…AYAKAELGCG (382 aa)) are carbamoyl phosphate synthetic domain. Positions 678–869 (QAAVERLGLL…LAKIAARVMA (192 aa)) constitute an ATP-grasp 2 domain. Arginine 714, arginine 753, leucine 755, glutamate 760, glycine 785, valine 786, histidine 787, serine 788, glutamine 828, and glutamate 840 together coordinate ATP. Mg(2+) contacts are provided by glutamine 828, glutamate 840, and asparagine 842. Mn(2+) is bound by residues glutamine 828, glutamate 840, and asparagine 842. One can recognise an MGS-like domain in the interval 936–1077 (SVYPEGGRAL…HAKVKASLEA (142 aa)). Residues 936–1077 (SVYPEGGRAL…HAKVKASLEA (142 aa)) form an allosteric domain region.

It belongs to the CarB family. Composed of two chains; the small (or glutamine) chain promotes the hydrolysis of glutamine to ammonia, which is used by the large (or ammonia) chain to synthesize carbamoyl phosphate. Tetramer of heterodimers (alpha,beta)4. It depends on Mg(2+) as a cofactor. Mn(2+) is required as a cofactor.

The catalysed reaction is hydrogencarbonate + L-glutamine + 2 ATP + H2O = carbamoyl phosphate + L-glutamate + 2 ADP + phosphate + 2 H(+). It carries out the reaction hydrogencarbonate + NH4(+) + 2 ATP = carbamoyl phosphate + 2 ADP + phosphate + 2 H(+). The protein operates within amino-acid biosynthesis; L-arginine biosynthesis; carbamoyl phosphate from bicarbonate: step 1/1. Its pathway is pyrimidine metabolism; UMP biosynthesis via de novo pathway; (S)-dihydroorotate from bicarbonate: step 1/3. Functionally, large subunit of the glutamine-dependent carbamoyl phosphate synthetase (CPSase). CPSase catalyzes the formation of carbamoyl phosphate from the ammonia moiety of glutamine, carbonate, and phosphate donated by ATP, constituting the first step of 2 biosynthetic pathways, one leading to arginine and/or urea and the other to pyrimidine nucleotides. The large subunit (synthetase) binds the substrates ammonia (free or transferred from glutamine from the small subunit), hydrogencarbonate and ATP and carries out an ATP-coupled ligase reaction, activating hydrogencarbonate by forming carboxy phosphate which reacts with ammonia to form carbamoyl phosphate. This Vibrio parahaemolyticus serotype O3:K6 (strain RIMD 2210633) protein is Carbamoyl phosphate synthase large chain.